Reading from the N-terminus, the 179-residue chain is ATP-dependent protease subunit HslV (179 aa).

Residue threonine 7 is part of the active site. Na(+) contacts are provided by alanine 162, cysteine 165, and threonine 168.

Belongs to the peptidase T1B family. HslV subfamily. As to quaternary structure, a double ring-shaped homohexamer of HslV is capped on each side by a ring-shaped HslU homohexamer. The assembly of the HslU/HslV complex is dependent on binding of ATP.

The protein localises to the cytoplasm. It carries out the reaction ATP-dependent cleavage of peptide bonds with broad specificity.. Allosterically activated by HslU binding. Protease subunit of a proteasome-like degradation complex believed to be a general protein degrading machinery. In Nitrosococcus oceani (strain ATCC 19707 / BCRC 17464 / JCM 30415 / NCIMB 11848 / C-107), this protein is ATP-dependent protease subunit HslV.